Here is a 160-residue protein sequence, read N- to C-terminus: Transcription elongation factor GreA (160 aa).

Residues 49 to 75 (SEYDEAKNDQAFTEGKILQLENKLKNA) are a coiled coil.

It belongs to the GreA/GreB family.

Necessary for efficient RNA polymerase transcription elongation past template-encoded arresting sites. The arresting sites in DNA have the property of trapping a certain fraction of elongating RNA polymerases that pass through, resulting in locked ternary complexes. Cleavage of the nascent transcript by cleavage factors such as GreA or GreB allows the resumption of elongation from the new 3'terminus. GreA releases sequences of 2 to 3 nucleotides. This chain is Transcription elongation factor GreA, found in Clostridium botulinum (strain Eklund 17B / Type B).